A 124-amino-acid polypeptide reads, in one-letter code: Small ribosomal subunit protein uS13 (124 aa).

Residues G95 to R124 form a disordered region.

Belongs to the universal ribosomal protein uS13 family. Part of the 30S ribosomal subunit. Forms a loose heterodimer with protein S19. Forms two bridges to the 50S subunit in the 70S ribosome.

Its function is as follows. Located at the top of the head of the 30S subunit, it contacts several helices of the 16S rRNA. In the 70S ribosome it contacts the 23S rRNA (bridge B1a) and protein L5 of the 50S subunit (bridge B1b), connecting the 2 subunits; these bridges are implicated in subunit movement. Contacts the tRNAs in the A and P-sites. This chain is Small ribosomal subunit protein uS13, found in Mycobacterium marinum (strain ATCC BAA-535 / M).